The chain runs to 1109 residues: Ankyrin repeat- and BTB/POZ domain-containing protein 3 (1109 aa).

Residues 168 to 188 (IVLSWGLAAHCTAAALAALSL) form a helical membrane-spanning segment. Residues 260 to 302 (SCSGPGPGSSSGSGPGPGSGPGAPAADKERETPGGGAASGGPC) are disordered. A compositionally biased stretch (gly residues) spans 264–280 (PGPGSSSGSGPGPGSGP). ANK repeat units lie at residues 608 to 637 (QGMTPLMYACVRGDEAMVQMLLDAGADLNV), 654 to 683 (RHWTALTFAVLHGHIPVVQLLLDAGAKVEG), 692 to 721 (YSETPLQLAAAVGNFELVSLLLERGADPLI), 735 to 764 (GDMNSFSQAAAHGHRNVFRKLLAQPEKEKS), and 830 to 859 (TWLESLRIAFQQHRRPLIQCLLKEFKTIQE). One can recognise a BTB domain in the interval 928–994 (SDVTFLVEGR…LYYGGPESLL (67 aa)).

The protein resides in the membrane. The sequence is that of Ankyrin repeat- and BTB/POZ domain-containing protein 3 (Abtb3) from Mus musculus (Mouse).